The sequence spans 410 residues: MARLSYVRIKYLFFSWLAVFIGSWVIYVRYNSYTELCRGQECKTAICDKYRKGIIDGSACEGLCEKETIYFGKCLSAKPNNQIYLGIWGNLEGVIKCQMENTLHLDFGVDLEPRKEIVLFDKPTRGTTVQKFKEMVHSLVKKRLGDQGNLQDLVNLILKAADSNKDGHVSLPEAKSAWALLQLNEFLLMVILQDKEHTPKLLGYCGDLYITERVPYTSLYGISLPWIIEVFIPMGLRKRMDQWFTPSWPRKAKIVIGLLEFVEDIFHGLYGNFLMCDVSAKNFGYNDKYDLKMVDMRKIIPEMSLKEYIKYKSCESDSDCVYGADCGTTCDQSKRCTTDVTQPNLAKVCLLVKDYLLSGTPSEIRDELEKQIYSCIALKAATKHMEMEHALILNNLKALLWKKISHTNDS.

Over 1–5 the chain is Cytoplasmic; sequence MARLS. The helical transmembrane segment at 6–26 threads the bilayer; the sequence is YVRIKYLFFSWLAVFIGSWVI. At 27–410 the chain is on the lumenal side; the sequence is YVRYNSYTEL…WKKISHTNDS (384 aa).

It belongs to the DIPK family. Among the many cysteines in the lumenal domain, most are probably involved in disulfide bonds.

The protein localises to the endoplasmic reticulum membrane. The protein is Divergent protein kinase domain 1A (dipk1a) of Xenopus laevis (African clawed frog).